Consider the following 383-residue polypeptide: Probable butyrate kinase (383 aa).

This sequence belongs to the acetokinase family.

Its subcellular location is the cytoplasm. It carries out the reaction butanoate + ATP = butanoyl phosphate + ADP. The chain is Probable butyrate kinase from Deinococcus radiodurans (strain ATCC 13939 / DSM 20539 / JCM 16871 / CCUG 27074 / LMG 4051 / NBRC 15346 / NCIMB 9279 / VKM B-1422 / R1).